A 236-amino-acid polypeptide reads, in one-letter code: 15,16-dihydrobiliverdin:ferredoxin oxidoreductase (236 aa).

This sequence belongs to the HY2 family.

It catalyses the reaction 15,16-dihydrobiliverdin + oxidized 2[4Fe-4S]-[ferredoxin] = biliverdin IXalpha + reduced 2[4Fe-4S]-[ferredoxin] + 2 H(+). Functionally, catalyzes the two-electron reduction of biliverdin IX-alpha at the C15 methine bridge. This Prochlorococcus marinus (strain AS9601) protein is 15,16-dihydrobiliverdin:ferredoxin oxidoreductase.